A 159-amino-acid chain; its full sequence is 2-C-methyl-D-erythritol 2,4-cyclodiphosphate synthase (159 aa).

2 residues coordinate a divalent metal cation: Asp-10 and His-12. 4-CDP-2-C-methyl-D-erythritol 2-phosphate contacts are provided by residues 10–12 and 36–37; these read DVH and HS. His-44 contributes to the a divalent metal cation binding site. 4-CDP-2-C-methyl-D-erythritol 2-phosphate-binding positions include 58–60, 63–67, 102–108, 134–137, Phe-141, and Arg-144; these read DIG, FPDTD, AQVPKMA, and TTTE.

This sequence belongs to the IspF family. Homotrimer. Requires a divalent metal cation as cofactor.

The enzyme catalyses 4-CDP-2-C-methyl-D-erythritol 2-phosphate = 2-C-methyl-D-erythritol 2,4-cyclic diphosphate + CMP. It functions in the pathway isoprenoid biosynthesis; isopentenyl diphosphate biosynthesis via DXP pathway; isopentenyl diphosphate from 1-deoxy-D-xylulose 5-phosphate: step 4/6. In terms of biological role, involved in the biosynthesis of isopentenyl diphosphate (IPP) and dimethylallyl diphosphate (DMAPP), two major building blocks of isoprenoid compounds. Catalyzes the conversion of 4-diphosphocytidyl-2-C-methyl-D-erythritol 2-phosphate (CDP-ME2P) to 2-C-methyl-D-erythritol 2,4-cyclodiphosphate (ME-CPP) with a corresponding release of cytidine 5-monophosphate (CMP). The protein is 2-C-methyl-D-erythritol 2,4-cyclodiphosphate synthase of Shewanella woodyi (strain ATCC 51908 / MS32).